A 147-amino-acid chain; its full sequence is Large ribosomal subunit protein uL13 (147 aa).

It belongs to the universal ribosomal protein uL13 family. As to quaternary structure, part of the 50S ribosomal subunit.

Functionally, this protein is one of the early assembly proteins of the 50S ribosomal subunit, although it is not seen to bind rRNA by itself. It is important during the early stages of 50S assembly. In Lactobacillus acidophilus (strain ATCC 700396 / NCK56 / N2 / NCFM), this protein is Large ribosomal subunit protein uL13.